The sequence spans 816 residues: Molybdenum cofactor sulfurase (816 aa).

Lys273 carries the N6-(pyridoxal phosphate)lysine modification. The active site involves Cys427. The region spanning 647–812 (NSDSQSHSCI…IRVGEEIIPN (166 aa)) is the MOSC domain.

This sequence belongs to the class-V pyridoxal-phosphate-dependent aminotransferase family. MOCOS subfamily. Pyridoxal 5'-phosphate is required as a cofactor. Ubiquitously expressed.

The enzyme catalyses Mo-molybdopterin + L-cysteine + AH2 = thio-Mo-molybdopterin + L-alanine + A + H2O. It participates in cofactor biosynthesis; molybdopterin biosynthesis. Its function is as follows. Sulfurates the molybdenum cofactor. Sulfation of molybdenum is essential for xanthine dehydrogenase (XDH) and aldehyde oxidase (ADO) enzymes in which molybdenum cofactor is liganded by 1 oxygen and 1 sulfur atom in active form. This is Molybdenum cofactor sulfurase (FLACCA) from Solanum lycopersicum (Tomato).